Reading from the N-terminus, the 202-residue chain is Small heat shock protein hspG5 (202 aa).

Residues 31–202 (KTIIDIIPPM…YSNTIKININ (172 aa)) enclose the sHSP domain. Residues 96–138 (TSSTTLDSKEDEASIEEFEDDIKPKSKSTVTTTATKENKEDEN) form a disordered region.

It belongs to the small heat shock protein (HSP20) family.

In Dictyostelium discoideum (Social amoeba), this protein is Small heat shock protein hspG5 (hspG5).